The primary structure comprises 601 residues: Abscisic acid cluster transcription factor abl7 (601 aa).

Residues 13–40 (CDECRRRKLKCDRVRPQCGTCALSESEC) constitute a DNA-binding region (zn(2)-C6 fungal-type).

It is found in the nucleus. Functionally, transcription factor that regulates the expression of the gene cluster that mediates the biosynthesis of abscisic acid (ABA), a phytohormone that acts antagonistically toward salicylic acid (SA), jasmonic acid (JA) and ethylene (ETH) signaling, to impede plant defense responses. The sequence is that of Abscisic acid cluster transcription factor abl7 from Leptosphaeria maculans (strain JN3 / isolate v23.1.3 / race Av1-4-5-6-7-8) (Blackleg fungus).